The following is a 147-amino-acid chain: Large ribosomal subunit protein uL13 (147 aa).

Belongs to the universal ribosomal protein uL13 family. As to quaternary structure, part of the 50S ribosomal subunit.

Its function is as follows. This protein is one of the early assembly proteins of the 50S ribosomal subunit, although it is not seen to bind rRNA by itself. It is important during the early stages of 50S assembly. This is Large ribosomal subunit protein uL13 from Streptomyces griseus subsp. griseus (strain JCM 4626 / CBS 651.72 / NBRC 13350 / KCC S-0626 / ISP 5235).